A 1002-amino-acid chain; its full sequence is Leucine-rich repeat receptor-like serine/threonine-protein kinase BAM2 (1002 aa).

The signal sequence occupies residues 1-22 (MKLLLLLLLLLLLHISHSFTVA). Residues 23 to 636 (KPITELHALL…SHVKPLSATT (614 aa)) are Extracellular-facing. N-linked (GlcNAc...) asparagine glycans are attached at residues Asn51, Asn80, Asn97, Asn123, Asn130, Asn153, and Asn164. LRR repeat units lie at residues 68–92 (LRHV…VAHL), 93–116 (PLLQ…ISNL), 118–140 (ELRH…LSSG), 141–165 (LVNL…LTNL), 167–188 (QLRH…TYGT), 189–213 (WPVL…IGNL), 215–238 (TLRE…IGNL), 239–262 (SELV…IGKL), 263–285 (QKLD…ELGL), 286–309 (ISSL…SFSQ), 311–334 (KNLT…IGEM), 335–358 (PELE…LGEN), 359–382 (GRLV…MCSG), 384–406 (RLMT…LGKC), 407–430 (ESLT…LFGL), 431–456 (PKLS…GVSG), 458–479 (LGQI…IGNL), 480–503 (SGVQ…IGRL), 505–527 (QLSK…ISRC), 528–551 (KLLT…LTGM), 552–575 (KILN…IASM), and 577–600 (SLTS…QFSY). Residues Asn212 and Asn237 are each glycosylated (N-linked (GlcNAc...) asparagine). Asn312 and Asn346 each carry an N-linked (GlcNAc...) asparagine glycan. Residue Asn420 is glycosylated (N-linked (GlcNAc...) asparagine). N-linked (GlcNAc...) asparagine glycosylation is present at Asn478. N-linked (GlcNAc...) asparagine glycosylation is found at Asn558, Asn587, and Asn602. Residues 637–657 (KLLLVLGLLFCSMVFAIVAII) form a helical membrane-spanning segment. Residues 658-1002 (KARSLRNASE…SGSPPDLLSN (345 aa)) lie on the Cytoplasmic side of the membrane. A Phosphothreonine modification is found at Thr682. The Protein kinase domain maps to 690-967 (LKEDNIIGKG…VQILTEIPKI (278 aa)). ATP is bound by residues 696 to 704 (IGKGGAGIV) and Lys718. Residues Tyr765 and Tyr803 each carry the phosphotyrosine modification. Catalysis depends on Asp816, which acts as the Proton acceptor. Residue Ser851 is modified to Phosphoserine. Residues Tyr859 and Tyr866 each carry the phosphotyrosine modification. The residue at position 867 (Thr867) is a Phosphothreonine. The segment at 969-1002 (LSKQQAAESDVTEKAPAINESSPDSGSPPDLLSN) is disordered. Over residues 989 to 1002 (SSPDSGSPPDLLSN) the composition is skewed to low complexity.

Belongs to the protein kinase superfamily. Ser/Thr protein kinase family. In terms of assembly, interacts with BAM1 and CLV1. Binds to the CLV3, CLE11, CLE18, CLE19, CLE22, CLE25, CLE26, CLE40, CLE41 and CLE42 mature peptides, probably via its extracellular leucine-rich repeat region. As to expression, expressed in seedlings, roots, rosette leaves, stems, inflorescences, flowers and siliques.

It is found in the cell membrane. The catalysed reaction is L-seryl-[protein] + ATP = O-phospho-L-seryl-[protein] + ADP + H(+). The enzyme catalyses L-threonyl-[protein] + ATP = O-phospho-L-threonyl-[protein] + ADP + H(+). In terms of biological role, necessary for male gametophyte development, as well as ovule specification and function. Involved in cell-cell communication process required during early anther development, and regulating cell division and differentiation to organize cell layers. Required for the development of high-ordered vascular strands within the leaf and a correlated control of leaf shape, size and symmetry. May regulate the CLV1-dependent CLV3-mediated signaling in meristems maintenance. In Arabidopsis thaliana (Mouse-ear cress), this protein is Leucine-rich repeat receptor-like serine/threonine-protein kinase BAM2 (BAM2).